The primary structure comprises 863 residues: Leucine--tRNA ligase (863 aa).

The 'HIGH' region motif lies at Pro-42–His-52. A 'KMSKS' region motif is present at residues Lys-618–Ser-622. ATP is bound at residue Lys-621.

It belongs to the class-I aminoacyl-tRNA synthetase family.

Its subcellular location is the cytoplasm. It catalyses the reaction tRNA(Leu) + L-leucine + ATP = L-leucyl-tRNA(Leu) + AMP + diphosphate. The protein is Leucine--tRNA ligase of Colwellia psychrerythraea (strain 34H / ATCC BAA-681) (Vibrio psychroerythus).